The following is a 246-amino-acid chain: RNA polymerase sigma-B factor (246 aa).

Residues 25–38 (DLIQEGNIGLMKAV) carry the Polymerase core binding motif. A DNA-binding region (H-T-H motif) is located at residues 201 to 220 (LKELGEHFGFSRERARQLEI).

Belongs to the sigma-70 factor family.

Sigma factors are initiation factors that promote the attachment of RNA polymerase to specific initiation sites and are then released. This sigma factor is essential for late-stage differentiation of M.xanthus. In Myxococcus xanthus, this protein is RNA polymerase sigma-B factor (sigB).